We begin with the raw amino-acid sequence, 429 residues long: MSNVAVVGSQWGDEGKGKVVDWLAERADVVVRFQGGHNAGHTLVVDGVTYKLSLLPSGAVRGKLSIIGNGVVVDPWALFEEIERVAAQGVVITPEGLRIAENAVLILPLHGNLDRAREAAAGNAKIGTTGRGIGPAYEDKVARRAIRLCDLADEDVLRFKVERLLTHHNALLRGLGEPELDADSLISALLEIAPRILPFASPVWKVLDEARRAGKKILFEGAQGAMLDVDHGTYPYVTSSNTVAPNAATGAGVGPSSVGFTLGITKAYTTRVGAGPFPTELFDDIGRTIGERGREFGTVTGRPRRCGWFDAVLVRQSVLVGGLRGIALTKLDVLDGLDELKICTGYRLDGQVIDHLPASMKAQSRVEPIYETLEGWKDSTFGARSWADLPAKAIKYIRRLEELIEAPVALLSTSPEREDTILVRDPFLD.

GTP contacts are provided by residues 12–18 (GDEGKGK) and 40–42 (GHT). The Proton acceptor role is filled by Asp-13. 2 residues coordinate Mg(2+): Asp-13 and Gly-40. IMP is bound by residues 13–16 (DEGK), 38–41 (NAGH), Thr-129, Arg-143, Gln-223, Thr-238, and Arg-302. Residue His-41 is the Proton donor of the active site. 298-304 (TVTGRPR) serves as a coordination point for substrate. Residues Arg-304, 330-332 (KLD), and 412-414 (STS) each bind GTP.

The protein belongs to the adenylosuccinate synthetase family. In terms of assembly, homodimer. Mg(2+) serves as cofactor.

It localises to the cytoplasm. The enzyme catalyses IMP + L-aspartate + GTP = N(6)-(1,2-dicarboxyethyl)-AMP + GDP + phosphate + 2 H(+). It functions in the pathway purine metabolism; AMP biosynthesis via de novo pathway; AMP from IMP: step 1/2. Plays an important role in the de novo pathway of purine nucleotide biosynthesis. Catalyzes the first committed step in the biosynthesis of AMP from IMP. The polypeptide is Adenylosuccinate synthetase (Rhodospirillum rubrum (strain ATCC 11170 / ATH 1.1.1 / DSM 467 / LMG 4362 / NCIMB 8255 / S1)).